The sequence spans 135 residues: Transcriptional activator protein (135 aa).

The short motif at 17-32 (KVTHRQVKKRAIRRRR) is the Nuclear localization signal element. Residues 37–54 (CGCSYYLHINCFNHGFTH) fold into a zinc finger. A compositionally biased stretch (polar residues) spans 77–88 (VFHNHQAPTTTI). A disordered region spans residues 77 to 117 (VFHNHQAPTTTIPAEPGHHNSPGSIQSQPEEGAGDSQMFSQ). A transactivation region spans residues 120–135 (DLDNLTASDWSFLKGL).

Belongs to the geminiviridae transcriptional activator protein family. As to quaternary structure, monomer. Homodimer. Homooligomer. Self-interaction correlates with nuclear localization and efficient activation of transcription. Monomers suppress local silencing by interacting with and inactivating host adenosine kinase 2 (ADK2) in the cytoplasm. Interacts with and inhibits host SNF1 kinase. Binds to ssDNA. Post-translationally, phosphorylated.

The protein localises to the host nucleus. It localises to the host cytoplasm. Its function is as follows. Strong activator of the late viral genes promoters. Enhances the expression of the capsid protein and nuclear shuttle protein. Acts as a suppressor of RNA-mediated gene silencing, also known as post-transcriptional gene silencing (PTGS), a mechanism of plant viral defense that limits the accumulation of viral RNAs. Suppresses the host RNA silencing by inhibiting adenosine kinase 2 (ADK2), a kinase involved in a general methylation pathway. Also suppresses the host basal defense by interacting with and inhibiting SNF1 kinase, a key regulator of cell metabolism implicated in innate antiviral defense. Determines pathogenicity. The chain is Transcriptional activator protein from Hewittia sublobata (Coralbush).